Consider the following 299-residue polypeptide: ATP phosphoribosyltransferase (299 aa).

It belongs to the ATP phosphoribosyltransferase family. Long subfamily. Mg(2+) is required as a cofactor.

The protein localises to the cytoplasm. The enzyme catalyses 1-(5-phospho-beta-D-ribosyl)-ATP + diphosphate = 5-phospho-alpha-D-ribose 1-diphosphate + ATP. It functions in the pathway amino-acid biosynthesis; L-histidine biosynthesis; L-histidine from 5-phospho-alpha-D-ribose 1-diphosphate: step 1/9. Its activity is regulated as follows. Feedback inhibited by histidine. Functionally, catalyzes the condensation of ATP and 5-phosphoribose 1-diphosphate to form N'-(5'-phosphoribosyl)-ATP (PR-ATP). Has a crucial role in the pathway because the rate of histidine biosynthesis seems to be controlled primarily by regulation of HisG enzymatic activity. The protein is ATP phosphoribosyltransferase of Shewanella sp. (strain MR-7).